The primary structure comprises 82 residues: Small ribosomal subunit protein bS16 (82 aa).

This sequence belongs to the bacterial ribosomal protein bS16 family.

The chain is Small ribosomal subunit protein bS16 from Francisella philomiragia subsp. philomiragia (strain ATCC 25017 / CCUG 19701 / FSC 153 / O#319-036).